The following is a 299-amino-acid chain: Prolyl 4-hydroxylase 2 (299 aa).

Topologically, residues 1–5 (MSMSR) are cytoplasmic. A helical; Signal-anchor for type II membrane protein membrane pass occupies residues 6–26 (LGLLLFVAILLVLLQSSTCLI). The Lumenal segment spans residues 27–299 (SSPSSIINPS…GNCRRSCKAC (273 aa)). In terms of domain architecture, Fe2OG dioxygenase spans 121 to 246 (NGEDLQVLRY…KWSATKWIHV (126 aa)). 2 residues coordinate Fe cation: H139 and D141. N165 carries an N-linked (GlcNAc...) asparagine glycan. H227 contributes to the Fe cation binding site. Residue K237 coordinates 2-oxoglutarate. Residues N258 and N263 are each glycosylated (N-linked (GlcNAc...) asparagine). The 41-residue stretch at 259 to 299 (CTDVNESCERWAVLGECGKNPEYMVGTPEIPGNCRRSCKAC) folds into the ShKT domain. 3 disulfides stabilise this stretch: C259–C299, C266–C292, and C275–C296.

It belongs to the P4HA family. The cofactor is Fe(2+). It depends on L-ascorbate as a cofactor. In terms of tissue distribution, expressed in epidermal root hair cells (trichoblasts).

The protein localises to the endoplasmic reticulum membrane. It is found in the golgi apparatus membrane. The enzyme catalyses L-prolyl-[collagen] + 2-oxoglutarate + O2 = trans-4-hydroxy-L-prolyl-[collagen] + succinate + CO2. In terms of biological role, catalyzes the post-translational formation of 4-hydroxyproline in -Xaa-Pro-Gly- sequences in proline-rich peptide sequences of plant glycoproteins and other proteins. Hydroxyprolines are important constituent of many plant cell wall glycoproteins such as extensins, hydroxyproline-rich glycoproteins, lectins and arabinogalactan proteins. Possesses high affinity for leucine-rich repeat and proline-rich extensins of root cell walls that are essential for root hair development. Hydroxyprolines define the subsequent O-glycosylation sites by arabinosyltransferases which elongate the O-arabinosides on extensins. Has low affinity for the substrates tested in vitro. This Arabidopsis thaliana (Mouse-ear cress) protein is Prolyl 4-hydroxylase 2.